The chain runs to 482 residues: tRNA sulfurtransferase (482 aa).

The 105-residue stretch at 61–165 (LAIRDALTRI…DDRLLLIKGR (105 aa)) folds into the THUMP domain. Residues 183-184 (LI), Lys-265, Gly-287, and Gln-296 each bind ATP. The cysteines at positions 344 and 456 are disulfide-linked. A Rhodanese domain is found at 404-482 (FGANDVILDI…GFANVKVYRP (79 aa)). The active-site Cysteine persulfide intermediate is the Cys-456.

This sequence belongs to the ThiI family.

The protein localises to the cytoplasm. The enzyme catalyses [ThiI sulfur-carrier protein]-S-sulfanyl-L-cysteine + a uridine in tRNA + 2 reduced [2Fe-2S]-[ferredoxin] + ATP + H(+) = [ThiI sulfur-carrier protein]-L-cysteine + a 4-thiouridine in tRNA + 2 oxidized [2Fe-2S]-[ferredoxin] + AMP + diphosphate. It catalyses the reaction [ThiS sulfur-carrier protein]-C-terminal Gly-Gly-AMP + S-sulfanyl-L-cysteinyl-[cysteine desulfurase] + AH2 = [ThiS sulfur-carrier protein]-C-terminal-Gly-aminoethanethioate + L-cysteinyl-[cysteine desulfurase] + A + AMP + 2 H(+). The protein operates within cofactor biosynthesis; thiamine diphosphate biosynthesis. Catalyzes the ATP-dependent transfer of a sulfur to tRNA to produce 4-thiouridine in position 8 of tRNAs, which functions as a near-UV photosensor. Also catalyzes the transfer of sulfur to the sulfur carrier protein ThiS, forming ThiS-thiocarboxylate. This is a step in the synthesis of thiazole, in the thiamine biosynthesis pathway. The sulfur is donated as persulfide by IscS. The protein is tRNA sulfurtransferase of Salmonella paratyphi B (strain ATCC BAA-1250 / SPB7).